The chain runs to 296 residues: Bifunctional protein FolD (296 aa).

NADP(+) contacts are provided by residues 166–168, Ser-191, and Ile-232; that span reads GRS.

The protein belongs to the tetrahydrofolate dehydrogenase/cyclohydrolase family. In terms of assembly, homodimer.

The enzyme catalyses (6R)-5,10-methylene-5,6,7,8-tetrahydrofolate + NADP(+) = (6R)-5,10-methenyltetrahydrofolate + NADPH. It catalyses the reaction (6R)-5,10-methenyltetrahydrofolate + H2O = (6R)-10-formyltetrahydrofolate + H(+). Its pathway is one-carbon metabolism; tetrahydrofolate interconversion. Catalyzes the oxidation of 5,10-methylenetetrahydrofolate to 5,10-methenyltetrahydrofolate and then the hydrolysis of 5,10-methenyltetrahydrofolate to 10-formyltetrahydrofolate. In Cereibacter sphaeroides (strain ATCC 17023 / DSM 158 / JCM 6121 / CCUG 31486 / LMG 2827 / NBRC 12203 / NCIMB 8253 / ATH 2.4.1.) (Rhodobacter sphaeroides), this protein is Bifunctional protein FolD.